Here is a 216-residue protein sequence, read N- to C-terminus: MOB kinase activator 3C (216 aa).

Zn(2+) is bound by residues Cys82, Cys87, His164, and His169.

The protein belongs to the MOB1/phocein family.

Its function is as follows. May regulate the activity of kinases. In Mus musculus (Mouse), this protein is MOB kinase activator 3C (Mob3c).